Here is a 223-residue protein sequence, read N- to C-terminus: Protein-L-isoaspartate O-methyltransferase (223 aa).

S70 is a catalytic residue.

Belongs to the methyltransferase superfamily. L-isoaspartyl/D-aspartyl protein methyltransferase family.

Its subcellular location is the cytoplasm. It carries out the reaction [protein]-L-isoaspartate + S-adenosyl-L-methionine = [protein]-L-isoaspartate alpha-methyl ester + S-adenosyl-L-homocysteine. In terms of biological role, catalyzes the methyl esterification of L-isoaspartyl residues in peptides and proteins that result from spontaneous decomposition of normal L-aspartyl and L-asparaginyl residues. It plays a role in the repair and/or degradation of damaged proteins. The protein is Protein-L-isoaspartate O-methyltransferase of Methylobacillus flagellatus (strain ATCC 51484 / DSM 6875 / VKM B-1610 / KT).